The primary structure comprises 230 residues: Extracellular deoxyribonuclease (230 aa).

The N-terminal stretch at 1 to 20 (MFRPLLSLCLALLVSAPAHA) is a signal peptide.

Belongs to the EndA/NucM nuclease family.

It localises to the secreted. This is Extracellular deoxyribonuclease (dns) from Aeromonas hydrophila.